The following is a 207-amino-acid chain: Homeobox protein BarH-like 1 (207 aa).

The homeobox DNA-binding region spans 95–154 (GRRSRTVFTELQLMGLEKRFEKQKYLSTPDRIDLAESLGLSQLQVKTWYQNRRMKWKKIV). The disordered stretch occupies residues 157–207 (GGGLESPTKPKGRPKKNSIPSSEQLSEQERAKETEKPPESPGEPSERQQEE). Basic and acidic residues predominate over residues 183–207 (EQERAKETEKPPESPGEPSERQQEE).

The protein belongs to the BAR homeobox family. As to expression, expressed predominantly in the facial primordia, developing stomach, and proximal limbs.

Its subcellular location is the nucleus. Its function is as follows. Transcription factor, which is involved in craniofacial development, in odontogenic region definition, and in stomach organogenesis. Binds to a regulatory module of the NCAM promoter. The chain is Homeobox protein BarH-like 1 (BARX1) from Gallus gallus (Chicken).